The chain runs to 134 residues: Outer membrane lipoprotein RcsF (134 aa).

A signal peptide spans 1–15; that stretch reads MRALPICLVALMLSG. Residue C16 is the site of N-palmitoyl cysteine attachment. C16 is lipidated: S-diacylglycerol cysteine. Disordered stretches follow at residues 22-48 and 67-88; these read SPVE…RATP and GEVS…IPTA. Positions 72 to 82 are enriched in polar residues; it reads DSCQASNQDSP. Intrachain disulfides connect C74/C118 and C109/C124.

This sequence belongs to the RcsF family.

Its subcellular location is the cell outer membrane. In terms of biological role, essential component of the Rcs signaling system, which controls transcription of numerous genes. Plays a role in signal transduction from the cell surface to the histidine kinase RcsC. May detect outer membrane defects. This chain is Outer membrane lipoprotein RcsF, found in Escherichia coli O6:H1 (strain CFT073 / ATCC 700928 / UPEC).